The chain runs to 267 residues: 3-methyl-2-oxobutanoate hydroxymethyltransferase (267 aa).

2 residues coordinate Mg(2+): Asp45 and Asp84. Residues 45 to 46 (DS), Asp84, and Lys113 contribute to the 3-methyl-2-oxobutanoate site. Mg(2+) is bound at residue Glu115. The active-site Proton acceptor is Glu182.

The protein belongs to the PanB family. Homodecamer; pentamer of dimers. Requires Mg(2+) as cofactor.

Its subcellular location is the cytoplasm. The catalysed reaction is 3-methyl-2-oxobutanoate + (6R)-5,10-methylene-5,6,7,8-tetrahydrofolate + H2O = 2-dehydropantoate + (6S)-5,6,7,8-tetrahydrofolate. The protein operates within cofactor biosynthesis; coenzyme A biosynthesis. Its function is as follows. Catalyzes the reversible reaction in which hydroxymethyl group from 5,10-methylenetetrahydrofolate is transferred onto alpha-ketoisovalerate to form ketopantoate. The polypeptide is 3-methyl-2-oxobutanoate hydroxymethyltransferase (Saccharolobus islandicus (strain M.16.27) (Sulfolobus islandicus)).